A 249-amino-acid polypeptide reads, in one-letter code: Triosephosphate isomerase (249 aa).

Asn12 and Lys14 together coordinate substrate. An N6-acetyllysine modification is found at Lys14. Tyr68 carries the post-translational modification 3'-nitrotyrosine. The residue at position 80 (Ser80) is a Phosphoserine. The Electrophile role is filled by His96. Ser106 is modified (phosphoserine). A Glycyl lysine isopeptide (Lys-Gly) (interchain with G-Cter in SUMO1) cross-link involves residue Lys142. Residue Lys149 is modified to N6-succinyllysine. Lys156 carries the N6-acetyllysine; alternate modification. Lys156 carries the post-translational modification N6-succinyllysine; alternate. A Phosphoserine modification is found at Ser159. Glu166 acts as the Proton acceptor in catalysis. Thr173 carries the post-translational modification Phosphothreonine. Lys194 is modified (N6-acetyllysine; alternate). Position 194 is an N6-succinyllysine; alternate (Lys194). Lys194 bears the N6-methyllysine; alternate mark. Phosphoserine is present on Ser198. Position 209 is a 3'-nitrotyrosine (Tyr209). Phosphoserine is present on Ser212. Position 214 is a phosphothreonine (Thr214). Ser223 carries the post-translational modification Phosphoserine. Lys238 is subject to N6-acetyllysine.

This sequence belongs to the triosephosphate isomerase family. Homodimer.

It localises to the cytoplasm. The enzyme catalyses dihydroxyacetone phosphate = methylglyoxal + phosphate. It catalyses the reaction D-glyceraldehyde 3-phosphate = dihydroxyacetone phosphate. Its pathway is carbohydrate degradation; glycolysis; D-glyceraldehyde 3-phosphate from glycerone phosphate: step 1/1. The protein operates within carbohydrate biosynthesis; gluconeogenesis. Functionally, triosephosphate isomerase is an extremely efficient metabolic enzyme that catalyzes the interconversion between dihydroxyacetone phosphate (DHAP) and D-glyceraldehyde-3-phosphate (G3P) in glycolysis and gluconeogenesis. In terms of biological role, it is also responsible for the non-negligible production of methylglyoxal a reactive cytotoxic side-product that modifies and can alter proteins, DNA and lipids. The protein is Triosephosphate isomerase (TPI1) of Pongo abelii (Sumatran orangutan).